A 529-amino-acid polypeptide reads, in one-letter code: Peptide chain release factor 3 (529 aa).

The tr-type G domain occupies 11 to 280 (AKRRTFAIIS…GLVKWAPAPM (270 aa)). Residues 20–27 (SHPDAGKT), 88–92 (DTPGH), and 142–145 (NKLD) contribute to the GTP site.

It belongs to the TRAFAC class translation factor GTPase superfamily. Classic translation factor GTPase family. PrfC subfamily.

The protein resides in the cytoplasm. Its function is as follows. Increases the formation of ribosomal termination complexes and stimulates activities of RF-1 and RF-2. It binds guanine nucleotides and has strong preference for UGA stop codons. It may interact directly with the ribosome. The stimulation of RF-1 and RF-2 is significantly reduced by GTP and GDP, but not by GMP. This is Peptide chain release factor 3 from Photorhabdus laumondii subsp. laumondii (strain DSM 15139 / CIP 105565 / TT01) (Photorhabdus luminescens subsp. laumondii).